Reading from the N-terminus, the 260-residue chain is Na(+)-translocating NADH-quinone reductase subunit C (260 aa).

The helical transmembrane segment at 12–32 threads the bilayer; the sequence is LLVIILLSLACSIIVAGSAVL. Residue Thr226 is modified to FMN phosphoryl threonine.

The protein belongs to the NqrC family. Composed of six subunits; NqrA, NqrB, NqrC, NqrD, NqrE and NqrF. Requires FMN as cofactor.

The protein resides in the cell inner membrane. The enzyme catalyses a ubiquinone + n Na(+)(in) + NADH + H(+) = a ubiquinol + n Na(+)(out) + NAD(+). NQR complex catalyzes the reduction of ubiquinone-1 to ubiquinol by two successive reactions, coupled with the transport of Na(+) ions from the cytoplasm to the periplasm. NqrA to NqrE are probably involved in the second step, the conversion of ubisemiquinone to ubiquinol. This Pasteurella multocida (strain Pm70) protein is Na(+)-translocating NADH-quinone reductase subunit C.